A 553-amino-acid polypeptide reads, in one-letter code: uncharacterized protein (553 aa).

This is an uncharacterized protein from Rickettsia prowazekii (strain Madrid E).